The chain runs to 335 residues: uncharacterized protein (335 aa).

Disordered regions lie at residues 153 to 174 (LNDKEDEEKLDQTTESEESDRI), 218 to 239 (HTSVRRSMSSVSSSASSTQEEV), and 254 to 295 (RCKV…PVTS). Over residues 156–170 (KEDEEKLDQTTESEE) the composition is skewed to acidic residues. Low complexity-rich tracts occupy residues 222-234 (RRSMSSVSSSASS) and 275-295 (THTSVSSLSVHSVSPTPPVTS).

This is an uncharacterized protein from Caenorhabditis elegans.